We begin with the raw amino-acid sequence, 500 residues long: Probable malate:quinone oxidoreductase (500 aa).

Belongs to the MQO family. It depends on FAD as a cofactor.

It catalyses the reaction (S)-malate + a quinone = a quinol + oxaloacetate. It participates in carbohydrate metabolism; tricarboxylic acid cycle; oxaloacetate from (S)-malate (quinone route): step 1/1. The sequence is that of Probable malate:quinone oxidoreductase from Bacillus cereus (strain G9842).